The chain runs to 152 residues: Heavy metal-associated isoprenylated plant protein 20 (152 aa).

The 64-residue stretch at 27–90 folds into the HMA domain; sequence MQTVNIKVKM…RIERTGKKAE (64 aa). 2 residues coordinate Cd(2+): Cys-38 and Cys-41. Cys-149 carries the cysteine methyl ester modification. Residue Cys-149 is the site of S-farnesyl cysteine attachment. Positions 150–152 are cleaved as a propeptide — removed in mature form; it reads TVM.

This sequence belongs to the HIPP family. In terms of assembly, interacts with ZHD11/HB29. As to expression, expressed in roots, shoot apical meristem, leaves and flowers.

Its subcellular location is the membrane. Its function is as follows. Heavy-metal-binding protein. Binds cadmium. May be involved in cadmium transport and play a role in cadmium detoxification. This Arabidopsis thaliana (Mouse-ear cress) protein is Heavy metal-associated isoprenylated plant protein 20.